A 334-amino-acid polypeptide reads, in one-letter code: MQGAPLRHDWTREEAEVLYALPFPDLMFLAQATHRRHFDPTRLETASLLSIKTGGCPEDCGYCSQSAHYDTGLKATKLMDQDAVVATARRAKEAGADRFCMAAAWRNPKDRDLDQVCDMVSAVKDLGMETCVTLGMLTPPQAARLKQAGLDYYNHNVDTSPEFYDRIITTRTMQDRIDTLANVREAGIKVCCGGIIGMGEEVDDRLGMLVLLANLDAHPDSVPINMWNEVKGVPVNDTAERPDGIALARLIAVARIMMPRSVVRLSAGRQYMSDELQSLCLLAGANSIFIGDVLLTTANPQAERDADLLTRLGMTSSLSARSVAAVDENVSANA.

The 220-residue stretch at 41–260 (TRLETASLLS…IAVARIMMPR (220 aa)) folds into the Radical SAM core domain. The [4Fe-4S] cluster site is built by C56, C60, and C63. Residues C100, C131, C191, and R264 each contribute to the [2Fe-2S] cluster site.

The protein belongs to the radical SAM superfamily. Biotin synthase family. In terms of assembly, homodimer. Requires [4Fe-4S] cluster as cofactor. The cofactor is [2Fe-2S] cluster.

It catalyses the reaction (4R,5S)-dethiobiotin + (sulfur carrier)-SH + 2 reduced [2Fe-2S]-[ferredoxin] + 2 S-adenosyl-L-methionine = (sulfur carrier)-H + biotin + 2 5'-deoxyadenosine + 2 L-methionine + 2 oxidized [2Fe-2S]-[ferredoxin]. It functions in the pathway cofactor biosynthesis; biotin biosynthesis; biotin from 7,8-diaminononanoate: step 2/2. Functionally, catalyzes the conversion of dethiobiotin (DTB) to biotin by the insertion of a sulfur atom into dethiobiotin via a radical-based mechanism. In Bradyrhizobium sp. (strain ORS 278), this protein is Biotin synthase.